Reading from the N-terminus, the 566-residue chain is Arginine--tRNA ligase (566 aa).

Residues 121–131 carry the 'HIGH' region motif; that stretch reads ANPNGPFHIGH.

Belongs to the class-I aminoacyl-tRNA synthetase family.

It is found in the cytoplasm. It carries out the reaction tRNA(Arg) + L-arginine + ATP = L-arginyl-tRNA(Arg) + AMP + diphosphate. The polypeptide is Arginine--tRNA ligase (Methanococcus maripaludis (strain C7 / ATCC BAA-1331)).